The chain runs to 460 residues: Ribosomal protein uS12 methylthiotransferase RimO (460 aa).

The MTTase N-terminal domain maps to 16–130 (NKIHFISLGC…ILSAIESKEY (115 aa)). Residues Cys-25, Cys-61, Cys-93, Cys-164, Cys-168, and Cys-171 each coordinate [4Fe-4S] cluster. In terms of domain architecture, Radical SAM core spans 150–382 (STPKHYAYLK…SQAQKQNVEK (233 aa)). One can recognise a TRAM domain in the interval 385–455 (QKLVGQVVEA…GYDLIGRVVK (71 aa)).

This sequence belongs to the methylthiotransferase family. RimO subfamily. [4Fe-4S] cluster is required as a cofactor.

The protein localises to the cytoplasm. It catalyses the reaction L-aspartate(89)-[ribosomal protein uS12]-hydrogen + (sulfur carrier)-SH + AH2 + 2 S-adenosyl-L-methionine = 3-methylsulfanyl-L-aspartate(89)-[ribosomal protein uS12]-hydrogen + (sulfur carrier)-H + 5'-deoxyadenosine + L-methionine + A + S-adenosyl-L-homocysteine + 2 H(+). Catalyzes the methylthiolation of an aspartic acid residue of ribosomal protein uS12. The chain is Ribosomal protein uS12 methylthiotransferase RimO from Chlamydia felis (strain Fe/C-56) (Chlamydophila felis).